We begin with the raw amino-acid sequence, 231 residues long: Protein FMP52, mitochondrial (231 aa).

Residues 1-44 (MNGLVLGATGLCGGGFLRHAQEAPQFSKVYAILRRELPFPATDK) constitute a mitochondrion transit peptide.

The protein belongs to the FMP52 family.

It is found in the mitochondrion outer membrane. The chain is Protein FMP52, mitochondrial (FMP52) from Saccharomyces cerevisiae (strain ATCC 204508 / S288c) (Baker's yeast).